The chain runs to 216 residues: Large ribosomal subunit protein uL1 (216 aa).

The protein belongs to the universal ribosomal protein uL1 family. Component of the large ribosomal subunit.

The protein resides in the cytoplasm. In terms of biological role, component of the large ribosomal subunit. The ribosome is a large ribonucleoprotein complex responsible for the synthesis of proteins in the cell. The chain is Large ribosomal subunit protein uL1 (rpl10a) from Ictalurus punctatus (Channel catfish).